A 473-amino-acid polypeptide reads, in one-letter code: Gamma-aminobutyric acid receptor subunit beta-3 (473 aa).

The signal sequence occupies residues 1–25; that stretch reads MWGFAGGRLFGIFSAPVLVAVVCCA. Over 26–246 the chain is Extracellular; the sequence is QSVNDPGNMS…FRLKRNIGYF (221 aa). 2 N-linked (GlcNAc...) asparagine glycosylation sites follow: asparagine 33 and asparagine 105. Tyrosine 122 is a histamine binding site. A disulfide bridge connects residues cysteine 161 and cysteine 175. Residue asparagine 174 is glycosylated (N-linked (GlcNAc...) asparagine). The 4-aminobutanoate site is built by glutamate 180, tyrosine 182, and threonine 227. Histamine contacts are provided by residues 181–182 and threonine 227; that span reads SY. Residues 247–267 traverse the membrane as a helical segment; that stretch reads ILQTYMPSILITILSWVSFWI. Residues 268-271 lie on the Cytoplasmic side of the membrane; sequence NYDA. A helical membrane pass occupies residues 272 to 292; sequence SAARVALGITTVLTMTTINTH. Topologically, residues 293 to 304 are extracellular; sequence LRETLPKIPYVK. Residues 305–328 form a helical membrane-spanning segment; sequence AIDMYLMGCFVFVFLALLEYAFVN. Residues 329-447 lie on the Cytoplasmic side of the membrane; sequence YIFFGRGPQR…KIPDLTDVNA (119 aa). A helical transmembrane segment spans residues 448-470; that stretch reads IDRWSRIVFPFTFSLFNLVYWLY. The Extracellular segment spans residues 471-473; it reads YVN.

The protein belongs to the ligand-gated ion channel (TC 1.A.9) family. Gamma-aminobutyric acid receptor (TC 1.A.9.5) subfamily. GABRB3 sub-subfamily. Heteropentamer, formed by a combination of alpha (GABRA1-6), beta (GABRB1-3), gamma (GABRG1-3), delta (GABRD), epsilon (GABRE), rho (GABRR1-3), pi (GABRP) and theta (GABRQ) chains, each subunit exhibiting distinct physiological and pharmacological properties. Can form functional homopentamers (in vitro). Interacts with UBQLN1. May interact with KIF21B. Identified in a complex of 720 kDa composed of LHFPL4, NLGN2, GABRA1, GABRB2, GABRG2 and GABRB3. Interacts with LHFPL4. Interacts with GIT1; this interaction is required for synaptic GABRB3 surface stability and inhibitory synapse strength.

Its subcellular location is the postsynaptic cell membrane. It is found in the cell membrane. The protein resides in the cytoplasmic vesicle membrane. It carries out the reaction chloride(in) = chloride(out). Its activity is regulated as follows. Potentiated by histamine. Its function is as follows. Beta subunit of the heteropentameric ligand-gated chloride channel gated by gamma-aminobutyric acid (GABA), a major inhibitory neurotransmitter in the brain. GABA-gated chloride channels, also named GABA(A) receptors (GABAAR), consist of five subunits arranged around a central pore and contain GABA active binding site(s) located at the alpha and beta subunit interface(s). GABAARs containing beta-3/GABRB3 subunit are found at both synaptic and extrasynaptic sites. When activated by GABA, GABAARs selectively allow the flow of chloride anions across the cell membrane down their electrochemical gradient. Chloride influx into the postsynaptic neuron following GABAAR opening decreases the neuron ability to generate a new action potential, thereby reducing nerve transmission. GABAARs containing alpha-1 and beta-3 subunits exhibit synaptogenic activity; the gamma-2 subunit being necessary but not sufficient to induce rapid synaptic contacts formation. Extrasynaptic beta-3 receptors contribute to the tonic GABAergic inhibition. GABAARs containing alpha-1, beta-3 and epsilon subunits may permit spontaneous chloride channel activity while preserving the structural information required for GABA-gated openings. Beta-containing GABAARs can simultaneously bind GABA and histamine where histamine binds at the interface of two neighboring beta subunits, which may be involved in the regulation of sleep and wakefulness. Plays an important role in somatosensation and in the production of antinociception. This is Gamma-aminobutyric acid receptor subunit beta-3 from Mus musculus (Mouse).